Here is a 285-residue protein sequence, read N- to C-terminus: 2-dehydro-3-deoxyphosphooctonate aldolase (285 aa).

The protein belongs to the KdsA family.

Its subcellular location is the cytoplasm. The catalysed reaction is D-arabinose 5-phosphate + phosphoenolpyruvate + H2O = 3-deoxy-alpha-D-manno-2-octulosonate-8-phosphate + phosphate. Its pathway is carbohydrate biosynthesis; 3-deoxy-D-manno-octulosonate biosynthesis; 3-deoxy-D-manno-octulosonate from D-ribulose 5-phosphate: step 2/3. The protein operates within bacterial outer membrane biogenesis; lipopolysaccharide biosynthesis. The polypeptide is 2-dehydro-3-deoxyphosphooctonate aldolase (Acinetobacter baumannii (strain SDF)).